A 434-amino-acid polypeptide reads, in one-letter code: Enolase (434 aa).

Residue Gln-163 participates in (2R)-2-phosphoglycerate binding. Glu-205 functions as the Proton donor in the catalytic mechanism. Residues Asp-243, Glu-291, and Asp-318 each contribute to the Mg(2+) site. Lys-343, Arg-372, Ser-373, and Lys-394 together coordinate (2R)-2-phosphoglycerate. Lys-343 acts as the Proton acceptor in catalysis.

Belongs to the enolase family. It depends on Mg(2+) as a cofactor.

The protein localises to the cytoplasm. Its subcellular location is the secreted. It is found in the cell surface. It carries out the reaction (2R)-2-phosphoglycerate = phosphoenolpyruvate + H2O. Its pathway is carbohydrate degradation; glycolysis; pyruvate from D-glyceraldehyde 3-phosphate: step 4/5. Catalyzes the reversible conversion of 2-phosphoglycerate (2-PG) into phosphoenolpyruvate (PEP). It is essential for the degradation of carbohydrates via glycolysis. The sequence is that of Enolase from Fusobacterium nucleatum subsp. nucleatum (strain ATCC 25586 / DSM 15643 / BCRC 10681 / CIP 101130 / JCM 8532 / KCTC 2640 / LMG 13131 / VPI 4355).